Consider the following 257-residue polypeptide: Aspartate/glutamate leucyltransferase (257 aa).

The protein belongs to the R-transferase family. Bpt subfamily.

Its subcellular location is the cytoplasm. It catalyses the reaction N-terminal L-glutamyl-[protein] + L-leucyl-tRNA(Leu) = N-terminal L-leucyl-L-glutamyl-[protein] + tRNA(Leu) + H(+). The catalysed reaction is N-terminal L-aspartyl-[protein] + L-leucyl-tRNA(Leu) = N-terminal L-leucyl-L-aspartyl-[protein] + tRNA(Leu) + H(+). In terms of biological role, functions in the N-end rule pathway of protein degradation where it conjugates Leu from its aminoacyl-tRNA to the N-termini of proteins containing an N-terminal aspartate or glutamate. The polypeptide is Aspartate/glutamate leucyltransferase (Sphingopyxis alaskensis (strain DSM 13593 / LMG 18877 / RB2256) (Sphingomonas alaskensis)).